Here is a 119-residue protein sequence, read N- to C-terminus: Protein GSKIP homolog (119 aa).

The protein belongs to the GSKIP family.

The polypeptide is Protein GSKIP homolog (Drosophila melanogaster (Fruit fly)).